The primary structure comprises 494 residues: GDP-fucose protein O-fucosyltransferase 4 (494 aa).

Topologically, residues 1 to 7 are cytoplasmic; sequence MAARYTE. The chain crosses the membrane as a helical; Signal-anchor for type II membrane protein span at residues 8–24; sequence AVLAALGVLSVCSASSS. The Lumenal segment spans residues 25–494; that stretch reads SGSGASGKAG…EIFMKRNKNL (470 aa). Residue Asn-167 is glycosylated (N-linked (GlcNAc...) asparagine). A disulfide bond links Cys-390 and Cys-393.

Belongs to the glycosyltransferase 10 family.

The protein localises to the endoplasmic reticulum membrane. The catalysed reaction is L-threonyl-[protein] + GDP-beta-L-fucose = 3-O-(alpha-L-fucosyl)-L-threonyl-[protein] + GDP + H(+). It carries out the reaction L-seryl-[protein] + GDP-beta-L-fucose = 3-O-(alpha-L-fucosyl)-L-seryl-[protein] + GDP + H(+). Its pathway is protein modification; protein glycosylation. In terms of biological role, protein O-fucosyltransferase that specifically catalyzes O-fucosylation of serine or threonine residues in EMI domains of target proteins, such as MMRN1, MMRN2 and EMID1. Attaches fucose through an O-glycosidic linkage. O-fucosylation of EMI domain-containing proteins may be required for facilitating protein folding and secretion. Also shows minor alpha-(1,3)-fucosyltransferase activity toward activity toward biantennary N-glycan acceptors. However, this was tested with a library of synthetic substrates and this activity is unsure in vivo. In Rattus norvegicus (Rat), this protein is GDP-fucose protein O-fucosyltransferase 4 (Fut11).